A 440-amino-acid chain; its full sequence is Adenylosuccinate synthetase (440 aa).

Residues 14–20 (GDEGKGK) and 42–44 (GHT) each bind GTP. Catalysis depends on Asp15, which acts as the Proton acceptor. Mg(2+)-binding residues include Asp15 and Gly42. IMP is bound by residues 15–18 (DEGK), 40–43 (NAGH), Thr131, Arg145, Gln226, Thr241, and Arg313. The active-site Proton donor is His43. 309–315 (ATTGRQR) provides a ligand contact to substrate. Residues Arg315, 341–343 (KLD), and 423–425 (STG) contribute to the GTP site.

Belongs to the adenylosuccinate synthetase family. As to quaternary structure, homodimer. The cofactor is Mg(2+).

It is found in the cytoplasm. The enzyme catalyses IMP + L-aspartate + GTP = N(6)-(1,2-dicarboxyethyl)-AMP + GDP + phosphate + 2 H(+). It functions in the pathway purine metabolism; AMP biosynthesis via de novo pathway; AMP from IMP: step 1/2. Plays an important role in the de novo pathway of purine nucleotide biosynthesis. Catalyzes the first committed step in the biosynthesis of AMP from IMP. The protein is Adenylosuccinate synthetase of Hydrogenovibrio crunogenus (strain DSM 25203 / XCL-2) (Thiomicrospira crunogena).